The sequence spans 241 residues: Phycocyanobilin:ferredoxin oxidoreductase (241 aa).

This sequence belongs to the HY2 family.

It carries out the reaction (2R,3Z)-phycocyanobilin + 4 oxidized [2Fe-2S]-[ferredoxin] = biliverdin IXalpha + 4 reduced [2Fe-2S]-[ferredoxin] + 4 H(+). Functionally, catalyzes the four-electron reduction of biliverdin IX-alpha (2-electron reduction at both the A and D rings); the reaction proceeds via an isolatable 2-electron intermediate, 181,182-dihydrobiliverdin. This is Phycocyanobilin:ferredoxin oxidoreductase from Prochlorococcus marinus (strain MIT 9301).